Consider the following 67-residue polypeptide: ATP synthase F(0) complex subunit 8 (67 aa).

Residues 8–24 (TWFINIVSMILTLFIVF) traverse the membrane as a helical segment. K54 is subject to N6-acetyllysine; alternate. At K54 the chain carries N6-succinyllysine; alternate. K57 is modified (N6-acetyllysine).

It belongs to the ATPase protein 8 family. Component of the ATP synthase complex composed at least of ATP5F1A/subunit alpha, ATP5F1B/subunit beta, ATP5MC1/subunit c (homooctomer), MT-ATP6/subunit a, MT-ATP8/subunit 8, ATP5ME/subunit e, ATP5MF/subunit f, ATP5MG/subunit g, ATP5MK/subunit k, ATP5MJ/subunit j, ATP5F1C/subunit gamma, ATP5F1D/subunit delta, ATP5F1E/subunit epsilon, ATP5PF/subunit F6, ATP5PB/subunit b, ATP5PD/subunit d, ATP5PO/subunit OSCP. ATP synthase complex consists of a soluble F(1) head domain (subunits alpha(3) and beta(3)) - the catalytic core - and a membrane F(0) domain - the membrane proton channel (subunits c, a, 8, e, f, g, k and j). These two domains are linked by a central stalk (subunits gamma, delta, and epsilon) rotating inside the F1 region and a stationary peripheral stalk (subunits F6, b, d, and OSCP). Interacts with PRICKLE3.

It localises to the mitochondrion membrane. Its function is as follows. Subunit 8, of the mitochondrial membrane ATP synthase complex (F(1)F(0) ATP synthase or Complex V) that produces ATP from ADP in the presence of a proton gradient across the membrane which is generated by electron transport complexes of the respiratory chain. ATP synthase complex consist of a soluble F(1) head domain - the catalytic core - and a membrane F(1) domain - the membrane proton channel. These two domains are linked by a central stalk rotating inside the F(1) region and a stationary peripheral stalk. During catalysis, ATP synthesis in the catalytic domain of F(1) is coupled via a rotary mechanism of the central stalk subunits to proton translocation. In vivo, can only synthesize ATP although its ATP hydrolase activity can be activated artificially in vitro. Part of the complex F(0) domain. The sequence is that of ATP synthase F(0) complex subunit 8 from Equus caballus (Horse).